The following is a 361-amino-acid chain: MNKGNTLDSIPTDLILEIFSRLSAKSVGRLRCLSKLWRKGEWFFFSSLQPQNLYEKPFLVVAADFHMKFSEDMSHDIYSYASGLIYFPKMLIENEKSGAIRVICNPITGQYAILPKLITLQAARSFLGFDPIDNQFKVLLVNNDIVNNDMDILTLGIGELMSEKLKFIEAKCFFALDDVQLINYKGKLGGISWNNHEVAPVELSMWVLEDVEKQEWSKNVYILPKNVVPNNWLHAAGVTVEGDIVFSEAVVSNPFDVFYFNPEKNTLQHVETHCNHEVFDDENLVNIFVDHVEDLKFDVMKPTYAATSIRPTEQKHKPTSTETSMSRKDHQVRTIDQPQQDRCTFESINNKFDVMCLLDDD.

The F-box domain occupies 4–50; that stretch reads GNTLDSIPTDLILEIFSRLSAKSVGRLRCLSKLWRKGEWFFFSSLQP. Residues 308–339 are disordered; the sequence is SIRPTEQKHKPTSTETSMSRKDHQVRTIDQPQ.

The sequence is that of Putative F-box protein At1g33010 from Arabidopsis thaliana (Mouse-ear cress).